We begin with the raw amino-acid sequence, 97 residues long: Ferredoxin-thioredoxin reductase, variable chain (97 aa).

It belongs to the ferredoxin thioredoxin reductase alpha subunit family. Heterodimer of subunit A (variable subunit) and subunit B (catalytic subunit). Heterodimeric FTR forms a complex with ferredoxin and thioredoxin.

It localises to the plastid. It is found in the chloroplast. Variable subunit of the ferredoxin-thioredoxin reductase (FTR), which catalyzes the two-electron reduction of thioredoxins by the electrons provided by reduced ferredoxin. In Zea mays (Maize), this protein is Ferredoxin-thioredoxin reductase, variable chain.